The chain runs to 120 residues: Large ribosomal subunit protein bL19 (120 aa).

It belongs to the bacterial ribosomal protein bL19 family.

Functionally, this protein is located at the 30S-50S ribosomal subunit interface and may play a role in the structure and function of the aminoacyl-tRNA binding site. The protein is Large ribosomal subunit protein bL19 of Synechococcus sp. (strain ATCC 27144 / PCC 6301 / SAUG 1402/1) (Anacystis nidulans).